We begin with the raw amino-acid sequence, 433 residues long: Type I acyl-CoA thioesterase mpaH (433 aa).

The abhydrolase domain stretch occupies residues His58 to Asp246. Residue Val60 participates in substrate binding. The Nucleophile role is filled by Ser139. Phe140 serves as a coordination point for substrate. Residues Asp163 and His365 contribute to the active site.

It belongs to the AB hydrolase superfamily. MpaH hydrolase family. Homodimer.

It is found in the peroxisome matrix. It carries out the reaction mycophenolyl-CoA + H2O = mycophenolate + CoA + H(+). Its pathway is secondary metabolite biosynthesis; terpenoid biosynthesis. Type I acyl-CoA thioesterase; part of the gene cluster that mediates the biosynthesis of mycophenolic acid (MPA), the first isolated antibiotic natural product in the world obtained from a culture of Penicillium brevicompactum in 1893. MpaH acts as a peroxisomal acyl-CoA hydrolase that converts MPA-CoA into the final product MPA. The first step of the pathway is the synthesis of 5-methylorsellinic acid (5MOA) by the cytosolic polyketide synthase mpaC. 5MOA is then converted to the phthalide compound 5,7-dihydroxy-4,6-dimethylphthalide (DHMP) by the endoplasmic reticulum-bound cytochrome P450 monooxygenase mpaDE. MpaDE first catalyzes hydroxylation of 5-MOA to 4,6-dihydroxy-2-(hydroxymethyl)-3-methylbenzoic acid (DHMB). MpaDE then acts as a lactone synthase that catalyzes the ring closure to convert DHMB into DHMP. The next step is the prenylation of DHMP by the Golgi apparatus-associated prenyltransferase mpaA to yield farnesyl-DHMP (FDHMP). The ER-bound oxygenase mpaB then mediates the oxidative cleavage the C19-C20 double bond in FDHMP to yield FDHMP-3C via a mycophenolic aldehyde intermediate. The O-methyltransferase mpaG catalyzes the methylation of FDHMP-3C to yield MFDHMP-3C. After the cytosolic methylation of FDHMP-3C, MFDHMP-3C enters into peroxisomes probably via free diffusion due to its low molecular weight. Upon a peroxisomal CoA ligation reaction, catalyzed by a beta-oxidation component enzyme acyl-CoA ligase ACL891, MFDHMP-3C-CoA would then be restricted to peroxisomes for the following beta-oxidation pathway steps. The peroxisomal beta-oxidation machinery than converts MFDHMP-3C-CoA into MPA_CoA, via a beta-oxidation chain-shortening process. Finally mpaH acts as a peroxisomal acyl-CoA hydrolase with high substrate specificity toward MPA-CoA to release the final product MPA. The protein is Type I acyl-CoA thioesterase mpaH of Penicillium brevicompactum.